The sequence spans 186 residues: Alkyl hydroperoxide reductase AhpD (186 aa).

Residue cysteine 131 is the Proton donor of the active site. A disulfide bridge connects residues cysteine 131 and cysteine 134. The Cysteine sulfenic acid (-SOH) intermediate role is filled by cysteine 134.

This sequence belongs to the AhpD family.

It carries out the reaction N(6)-[(R)-dihydrolipoyl]-L-lysyl-[lipoyl-carrier protein] + a hydroperoxide = N(6)-[(R)-lipoyl]-L-lysyl-[lipoyl-carrier protein] + an alcohol + H2O. Its function is as follows. Antioxidant protein with alkyl hydroperoxidase activity. Required for the reduction of the AhpC active site cysteine residues and for the regeneration of the AhpC enzyme activity. The polypeptide is Alkyl hydroperoxide reductase AhpD (Rhodospirillum centenum (strain ATCC 51521 / SW)).